The primary structure comprises 101 residues: Small ribosomal subunit protein uS14 (101 aa).

It belongs to the universal ribosomal protein uS14 family. In terms of assembly, part of the 30S ribosomal subunit. Contacts proteins S3 and S10.

Its function is as follows. Binds 16S rRNA, required for the assembly of 30S particles and may also be responsible for determining the conformation of the 16S rRNA at the A site. The chain is Small ribosomal subunit protein uS14 from Paramagnetospirillum magneticum (strain ATCC 700264 / AMB-1) (Magnetospirillum magneticum).